Consider the following 761-residue polypeptide: uncharacterized protein (761 aa).

TPR repeat units lie at residues 35-68 (EEGK…SLNS), 69-102 (AQGL…SDVD), 103-136 (DALY…NPNK), 137-170 (VEIL…KPDF), 172-203 (EAEE…KNPN), 204-237 (EEVY…FPHD), 351-384 (LGVL…NPSA), and 419-452 (ASAG…VKEE). Residues 487 to 761 (KRPIFVLGMP…PKGLVGYTVG (275 aa)) form a protein sulfotransferase-like region.

It in the C-terminal section; belongs to the protein sulfotransferase family.

This is an uncharacterized protein from Aquifex aeolicus (strain VF5).